The following is a 156-amino-acid chain: MPRRRVVGQRKILPDPKFHSELLAKFINVIMQDGKKSTAEKIIYKALDVVAEKKSEAHLSILEAALDNVRPSVEVKSRRVGGSTYQVPCEVRPVRRNALAMRWLVEAARKRGEKSMALRLAGEMLDASENKGTAVKKREDVHRMAEANKAFAHYRW.

This sequence belongs to the universal ribosomal protein uS7 family. Part of the 30S ribosomal subunit. Contacts proteins S9 and S11.

Functionally, one of the primary rRNA binding proteins, it binds directly to 16S rRNA where it nucleates assembly of the head domain of the 30S subunit. Is located at the subunit interface close to the decoding center, probably blocks exit of the E-site tRNA. The chain is Small ribosomal subunit protein uS7 from Shewanella denitrificans (strain OS217 / ATCC BAA-1090 / DSM 15013).